A 98-amino-acid chain; its full sequence is U1-theraphotoxin-Ap1a (98 aa).

The N-terminal stretch at 1–23 (MRSLTLAAVLACSLLLVFHTSAA) is a signal peptide. A propeptide spanning residues 24 to 50 (EELEVQDGHLMNPGDGDTALATVDDER) is cleaved from the precursor. Intrachain disulfides connect Cys-54/Cys-84, Cys-58/Cys-90, and Cys-72/Cys-95. Positions 63–84 (DGKSKEGKPCKPKGDKNKDKKC) are disordered.

The protein belongs to the neurotoxin 12 (Hwtx-2) family. 01 (Ap1a) subfamily. In terms of tissue distribution, expressed by the venom gland.

The protein localises to the secreted. Its function is as follows. Is toxic to both insects and mammals. Induces reversible paralysis when injected into S.frugiperda larvae. Reduces both the amplitude and frequency of responses from muscle (GF-TTM and GF-DLM) pathways in the D.melanogaster giant fiber circuit, suggesting an action at the neuromuscular junction, which is mediated by glutamatergic receptors. In mice, intracranial injection of 30 ug causes increased urination, myoclonus, hypermotility with circular movements followed by respiratory and generalized seizures resulting in death within 25-35 minutes of injection. This chain is U1-theraphotoxin-Ap1a, found in Acanthoscurria paulensis (Brazilian giant black tarantula spider).